The chain runs to 311 residues: Pyrimidine-specific ribonucleoside hydrolase RihA (311 aa).

His240 is a catalytic residue.

Belongs to the IUNH family. RihA subfamily.

Its function is as follows. Hydrolyzes cytidine or uridine to ribose and cytosine or uracil, respectively. In Salmonella typhimurium (strain LT2 / SGSC1412 / ATCC 700720), this protein is Pyrimidine-specific ribonucleoside hydrolase RihA.